A 253-amino-acid polypeptide reads, in one-letter code: Sulfate transporter CysZ (253 aa).

4 helical membrane-spanning segments follow: residues 31-51 (FVIL…WWLF), 75-95 (LLWP…FSTI), 151-171 (IVLL…PVLW), and 222-242 (IPLL…AMWV).

Belongs to the CysZ family.

Its subcellular location is the cell inner membrane. Functionally, high affinity, high specificity proton-dependent sulfate transporter, which mediates sulfate uptake. Provides the sulfur source for the cysteine synthesis pathway. The protein is Sulfate transporter CysZ of Escherichia coli O127:H6 (strain E2348/69 / EPEC).